The primary structure comprises 202 residues: tRNA (pseudouridine(54)-N(1))-methyltransferase (202 aa).

S-adenosyl-L-methionine contacts are provided by leucine 130, glycine 152, and cysteine 185.

The protein belongs to the methyltransferase superfamily. TrmY family. Homodimer.

It is found in the cytoplasm. It carries out the reaction pseudouridine(54) in tRNA + S-adenosyl-L-methionine = N(1)-methylpseudouridine(54) in tRNA + S-adenosyl-L-homocysteine + H(+). Its function is as follows. Specifically catalyzes the N1-methylation of pseudouridine at position 54 (Psi54) in tRNAs. This is tRNA (pseudouridine(54)-N(1))-methyltransferase from Methanococcoides burtonii (strain DSM 6242 / NBRC 107633 / OCM 468 / ACE-M).